We begin with the raw amino-acid sequence, 317 residues long: Sperm acrosome membrane-associated protein 6 (317 aa).

An N-terminal signal peptide occupies residues 1 to 18 (MFVFIAKLLIFSSVITSA). Over 19–281 (FTCYQCFIDE…PSFSFWLPRP (263 aa)) the chain is Extracellular. Disulfide bonds link cysteine 21–cysteine 143, cysteine 24–cysteine 146, cysteine 35–cysteine 51, cysteine 128–cysteine 151, and cysteine 132–cysteine 157. N-linked (GlcNAc...) asparagine glycosylation occurs at asparagine 29. Residues 123–237 (PRVSGCLPPC…EVLSQEQSLV (115 aa)) enclose the Ig-like domain. Asparagine 168 carries N-linked (GlcNAc...) asparagine glycosylation. Residues cysteine 174 and cysteine 227 are joined by a disulfide bond. The helical transmembrane segment at 282 to 302 (ALLITCLTATMLLIFLSLGAM) threads the bilayer. Residues 303–317 (CRLWYQIRTNVSNPA) lie on the Cytoplasmic side of the membrane.

It belongs to the SPACA6 family. In terms of assembly, forms a complex with izumo1 and tmem81 on spermatocyte cell membrane. The complex binds to oocyte protein bncr. As to expression, expressed in testis.

It localises to the cytoplasmic vesicle. The protein localises to the secretory vesicle. It is found in the acrosome membrane. In terms of biological role, sperm protein required for fusion of sperm with the egg membrane during fertilization. May regulate the expression of sperm surface protein DCST2. This chain is Sperm acrosome membrane-associated protein 6, found in Danio rerio (Zebrafish).